A 602-amino-acid polypeptide reads, in one-letter code: ATP-dependent DNA helicase II subunit 1 (602 aa).

The region spanning 268–483 (FQCPLILDEK…YDNMKKVTQS (216 aa)) is the Ku domain. Phosphoserine occurs at positions 370, 371, and 372.

Belongs to the ku70 family. Heterodimer of YKU70/HDF1 and YKU80/HDF2. Post-translationally, sumoylated by MMS21.

The protein resides in the nucleus. It localises to the chromosome. It is found in the telomere. The enzyme catalyses ATP + H2O = ADP + phosphate + H(+). Functionally, single-stranded DNA-dependent ATP-dependent helicase. Involved in non-homologous end joining (NHEJ) DNA double strand break repair. DNA-binding is sequence-independent but has a high affinity to nicks in double-stranded DNA and to the ends of duplex DNA. Binds to naturally occurring chromosomal ends, and therefore provides chromosomal end protection. Appears to have a role in recruitment of telomerase and CDC13 to the telomere and the subsequent telomere elongation. Required also for telomere recombination to repair telomeric ends in the absence of telomerase. KU70, of the KU70/KU80 heterodimer, binds to the stem loop of TLC1, the RNA component of telomerase. Involved in telomere maintenance. Interacts with telomeric repeats and subtelomeric sequences thereby controlling telomere length and protecting against subtelomeric rearrangement. Maintains telomeric chromatin, which is involved in silencing the expression of genes located at the telomere. Required for mating-type switching. The chain is ATP-dependent DNA helicase II subunit 1 (YKU70) from Saccharomyces cerevisiae (strain ATCC 204508 / S288c) (Baker's yeast).